Reading from the N-terminus, the 130-residue chain is EG45-like domain containing protein 2 (130 aa).

The first 25 residues, 1–25 (MIKMAVKFVVVMIVFAQILAPIAEA), serve as a signal peptide directing secretion. The 103-residue stretch at 28-130 (GKAVYYDPPY…GNIRVVYTPI (103 aa)) folds into the Expansin-like EG45 domain. Residue N106 is glycosylated (N-linked (GlcNAc...) asparagine).

In terms of tissue distribution, expressed in unstressed leaves.

Its subcellular location is the secreted. In terms of biological role, plays a systemic role in water and solute homeostasis. The sequence is that of EG45-like domain containing protein 2 (EGC2) from Arabidopsis thaliana (Mouse-ear cress).